A 247-amino-acid chain; its full sequence is GTP cyclohydrolase 1 type 2 homolog (247 aa).

Residues His63, His64, Asp101, His215, and Glu219 each contribute to the a divalent metal cation site.

This sequence belongs to the GTP cyclohydrolase I type 2/NIF3 family. As to quaternary structure, homohexamer.

The polypeptide is GTP cyclohydrolase 1 type 2 homolog (Buchnera aphidicola subsp. Acyrthosiphon pisum (strain APS) (Acyrthosiphon pisum symbiotic bacterium)).